A 328-amino-acid polypeptide reads, in one-letter code: Pancreas transcription factor 1 subunit alpha (328 aa).

A bHLH domain is found at 163–215 (QLRQAANVRERRRMQSINDAFEGLRSHIPTLPYEKRLSKVDTLRLAIGYINFL). Disordered stretches follow at residues 259 to 278 (RGTRSPSPSDPDYGLPPLAG) and 305 to 328 (DPRKLNSKSSFNNIENEPPFEFVS).

Component of the pancreas transcription factor 1 complex (PTF1) which is composed of TCF3/p75, TCF12/p64 and PTF1A/p48. TCF3 is responsible for the nuclear import of the p48/p64 complex. Interacts with TCF3 and RBPSUH/RBP-Jkappa. Pancreas-specific (at protein level). Loss of expression is seen in ductal type pancreas cancers.

The protein resides in the nucleus. The protein localises to the cytoplasm. In terms of biological role, transcription factor implicated in the cell fate determination in various organs. Binds to the E-box consensus sequence 5'-CANNTG-3'. Plays a role in early and late pancreas development and differentiation. Important for determining whether cells allocated to the pancreatic buds continue towards pancreatic organogenesis or revert back to duodenal fates. May be involved in the maintenance of exocrine pancreas-specific gene expression including ELA1 and amylase. Required for the formation of pancreatic acinar and ductal cells. Plays an important role in cerebellar development. Directly regulated by FOXN4 and RORC during retinal development, FOXN4-PTF1A pathway plays a central role in directing the differentiation of retinal progenitors towards horizontal and amacrine fates. The protein is Pancreas transcription factor 1 subunit alpha (PTF1A) of Homo sapiens (Human).